The chain runs to 418 residues: Cyclin-dependent kinase 15 (418 aa).

The 286-residue stretch at 84–369 folds into the Protein kinase domain; sequence YLNLEKLGEG…AQDALLHPYF (286 aa). ATP-binding positions include 90–98 and Lys113; that span reads LGEGTYATV. Asp205 functions as the Proton acceptor in the catalytic mechanism.

The protein belongs to the protein kinase superfamily. CMGC Ser/Thr protein kinase family. CDC2/CDKX subfamily. The cofactor is Mg(2+).

It catalyses the reaction L-seryl-[protein] + ATP = O-phospho-L-seryl-[protein] + ADP + H(+). The enzyme catalyses L-threonyl-[protein] + ATP = O-phospho-L-threonyl-[protein] + ADP + H(+). Its function is as follows. Serine/threonine-protein kinase involved in the control of the eukaryotic cell cycle, whose activity is controlled by an associated cyclin. The protein is Cyclin-dependent kinase 15 (cdk15) of Danio rerio (Zebrafish).